Reading from the N-terminus, the 522-residue chain is Glutamyl-tRNA(Gln) amidotransferase subunit A (522 aa).

Catalysis depends on charge relay system residues Lys-88 and Ser-163. Residue Ser-187 is the Acyl-ester intermediate of the active site.

It belongs to the amidase family. GatA subfamily. As to quaternary structure, heterotrimer of A, B and C subunits.

It carries out the reaction L-glutamyl-tRNA(Gln) + L-glutamine + ATP + H2O = L-glutaminyl-tRNA(Gln) + L-glutamate + ADP + phosphate + H(+). Functionally, allows the formation of correctly charged Gln-tRNA(Gln) through the transamidation of misacylated Glu-tRNA(Gln) in organisms which lack glutaminyl-tRNA synthetase. The reaction takes place in the presence of glutamine and ATP through an activated gamma-phospho-Glu-tRNA(Gln). The polypeptide is Glutamyl-tRNA(Gln) amidotransferase subunit A (Paenarthrobacter aurescens (strain TC1)).